A 297-amino-acid polypeptide reads, in one-letter code: Probable endonuclease 4 (297 aa).

9 residues coordinate Zn(2+): histidine 69, histidine 110, glutamate 145, aspartate 179, histidine 182, histidine 214, aspartate 227, histidine 229, and glutamate 259.

This sequence belongs to the AP endonuclease 2 family. It depends on Zn(2+) as a cofactor.

The enzyme catalyses Endonucleolytic cleavage to 5'-phosphooligonucleotide end-products.. In terms of biological role, endonuclease IV plays a role in DNA repair. It cleaves phosphodiester bonds at apurinic or apyrimidinic (AP) sites, generating a 3'-hydroxyl group and a 5'-terminal sugar phosphate. This is Probable endonuclease 4 from Oceanobacillus iheyensis (strain DSM 14371 / CIP 107618 / JCM 11309 / KCTC 3954 / HTE831).